The sequence spans 248 residues: tRNA pseudouridine synthase A (248 aa).

The Nucleophile role is filled by D53. Substrate is bound at residue Y111.

The protein belongs to the tRNA pseudouridine synthase TruA family. As to quaternary structure, homodimer.

It carries out the reaction uridine(38/39/40) in tRNA = pseudouridine(38/39/40) in tRNA. Its function is as follows. Formation of pseudouridine at positions 38, 39 and 40 in the anticodon stem and loop of transfer RNAs. The protein is tRNA pseudouridine synthase A of Listeria monocytogenes serovar 1/2a (strain ATCC BAA-679 / EGD-e).